The primary structure comprises 443 residues: Signal recognition particle 54 kDa protein (443 aa).

GTP is bound by residues 104 to 111, 184 to 188, and 242 to 245; these read GLQGSGKT, DTAGR, and TKLD.

The protein belongs to the GTP-binding SRP family. SRP54 subfamily. As to quaternary structure, part of the signal recognition particle protein translocation system, which is composed of SRP and FtsY. Archaeal SRP consists of a 7S RNA molecule of 300 nucleotides and two protein subunits: SRP54 and SRP19.

Its subcellular location is the cytoplasm. The catalysed reaction is GTP + H2O = GDP + phosphate + H(+). Involved in targeting and insertion of nascent membrane proteins into the cytoplasmic membrane. Binds to the hydrophobic signal sequence of the ribosome-nascent chain (RNC) as it emerges from the ribosomes. The SRP-RNC complex is then targeted to the cytoplasmic membrane where it interacts with the SRP receptor FtsY. The polypeptide is Signal recognition particle 54 kDa protein (Methanosarcina barkeri (strain Fusaro / DSM 804)).